A 223-amino-acid chain; its full sequence is Sigma non-opioid intracellular receptor 1 (223 aa).

Topologically, residues 1-9 (MCWAVGRRW) are lumenal. Residues 2-8 (CWAVGRR) form a targeting to endoplasmic reticulum-associated lipid droplets region. A helical membrane pass occupies residues 10–30 (AWAALLLAVAAVLAQVVWLWL). At 31–223 (GTQSFVFQHE…LTTYLFGQDA (193 aa)) the chain is on the cytoplasmic side. Residues 99-106 (SLSEYVLL) are important for ligand-binding. The segment at 177 to 223 (VIPSTLGFALADTVFSTQDFLTLFYTLRAYARGLRLELTTYLFGQDA) is C-terminal hydrophobic region.

The protein belongs to the ERG2 family. As to quaternary structure, homotrimer. Forms a ternary complex with ANK2 and ITPR3. The complex is disrupted by agonists. Interacts with KCNA4. Interacts with KCNA2; cocaine consumption leads to increased interaction. Interacts with RNF112 in an oxidative stress-regulated manner.

It localises to the nucleus inner membrane. It is found in the nucleus outer membrane. Its subcellular location is the nucleus envelope. The protein localises to the cytoplasmic vesicle. The protein resides in the endoplasmic reticulum membrane. It localises to the membrane. It is found in the lipid droplet. Its subcellular location is the cell junction. The protein localises to the cell membrane. The protein resides in the cell projection. It localises to the growth cone. It is found in the postsynaptic density membrane. Its function is as follows. Functions in lipid transport from the endoplasmic reticulum and is involved in a wide array of cellular functions probably through regulation of the biogenesis of lipid microdomains at the plasma membrane. Involved in the regulation of different receptors it plays a role in BDNF signaling and EGF signaling. Also regulates ion channels like the potassium channel and could modulate neurotransmitter release. Plays a role in calcium signaling through modulation together with ANK2 of the ITP3R-dependent calcium efflux at the endoplasmic reticulum. Plays a role in several other cell functions including proliferation, survival and death. Originally identified for its ability to bind various psychoactive drugs it is involved in learning processes, memory and mood alteration. Necessary for proper mitochondrial axonal transport in motor neurons, in particular the retrograde movement of mitochondria. Plays a role in protecting cells against oxidative stress-induced cell death via its interaction with RNF112. The polypeptide is Sigma non-opioid intracellular receptor 1 (SIGMAR1) (Bos taurus (Bovine)).